A 401-amino-acid chain; its full sequence is Putative phosphatidylinositol 4-phosphate 5-kinase 11 (401 aa).

A PIPK domain is found at 1–390 (MELRATVENR…RFQDFVSNIF (390 aa)). The segment covering 242 to 260 (SFKSNSTKSMKTASSSPDR) has biased composition (polar residues). Positions 242–268 (SFKSNSTKSMKTASSSPDRSSVAMYSC) are disordered. The tract at residues 350–371 (YGMKKRIEHCYKSIQYNSNSIS) is activation loop.

It carries out the reaction a 1,2-diacyl-sn-glycero-3-phospho-(1D-myo-inositol 4-phosphate) + ATP = a 1,2-diacyl-sn-glycero-3-phospho-(1D-myo-inositol-4,5-bisphosphate) + ADP + H(+). The chain is Putative phosphatidylinositol 4-phosphate 5-kinase 11 (PIP5K11) from Arabidopsis thaliana (Mouse-ear cress).